The following is a 724-amino-acid chain: Hyaluronan mediated motility receptor (724 aa).

Disordered stretches follow at residues Met-1–Gly-22 and Lys-40–Asp-81. Position 20 is a phosphoserine (Ser-20). 2 stretches are compositionally biased toward basic and acidic residues: residues Gln-46–Thr-60 and Lys-70–Asp-81. Residues Asn-133, Asn-477, Asn-567, and Asn-588 are each glycosylated (N-linked (GlcNAc...) asparagine). The tract at residues Glu-365–Gln-546 is required for interaction with FAM83D. Hyaluronic acid-binding regions lie at residues Lys-635–Lys-645 and Lys-657–Lys-666. Residue Thr-703 is modified to Phosphothreonine.

In terms of assembly, interacts with ANKRD26. Interacts with DYNLL1. Interacts with FAM83D/CHICA. As to expression, expressed in testis. Expressed in the breast.

Its subcellular location is the cell surface. It localises to the cytoplasm. The protein localises to the cytoskeleton. It is found in the spindle. In terms of biological role, receptor for hyaluronic acid (HA). Involved in cell motility. When hyaluronan binds to HMMR, the phosphorylation of a number of proteins, including PTK2/FAK1 occurs. May also be involved in cellular transformation and metastasis formation, and in regulating extracellular-regulated kinase (ERK) activity. May act as a regulator of adipogenisis. This is Hyaluronan mediated motility receptor (HMMR) from Homo sapiens (Human).